The following is a 504-amino-acid chain: ATP synthase subunit alpha (504 aa).

169–176 (GDRKTGKT) contributes to the ATP binding site.

This sequence belongs to the ATPase alpha/beta chains family. F-type ATPases have 2 components, CF(1) - the catalytic core - and CF(0) - the membrane proton channel. CF(1) has five subunits: alpha(3), beta(3), gamma(1), delta(1), epsilon(1). CF(0) has three main subunits: a(1), b(2) and c(9-12). The alpha and beta chains form an alternating ring which encloses part of the gamma chain. CF(1) is attached to CF(0) by a central stalk formed by the gamma and epsilon chains, while a peripheral stalk is formed by the delta and b chains.

The protein localises to the cell membrane. The catalysed reaction is ATP + H2O + 4 H(+)(in) = ADP + phosphate + 5 H(+)(out). Produces ATP from ADP in the presence of a proton gradient across the membrane. The alpha chain is a regulatory subunit. The chain is ATP synthase subunit alpha from Leuconostoc citreum (strain KM20).